Reading from the N-terminus, the 332-residue chain is Serpentine receptor class alpha-10 (332 aa).

Residues 1-26 lie on the Extracellular side of the membrane; that stretch reads MTSSNISICATEDQMVLQTSLLLRVN. A helical transmembrane segment spans residues 27 to 47; that stretch reads VILMTTVAIFTFVLTYRALFI. Over 48–64 the chain is Cytoplasmic; that stretch reads LKQRPIFHKSTKILLYT. A helical membrane pass occupies residues 65–85; that stretch reads SLIFVNIHEIIFMVIQCVAFI. Residues 86–109 lie on the Extracellular side of the membrane; it reads RSFTLSDKPCEIMRTTLECRFKNH. Residues 110–132 traverse the membrane as a helical segment; sequence VLIFGIAGMNFNQFGLTVDRLLA. Over 133 to 146 the chain is Cytoplasmic; that stretch reads TVIPQTYSHLGSFP. Residues 147–167 traverse the membrane as a helical segment; sequence GILISILVIGCSIAAPLIIAI. Topologically, residues 168–191 are extracellular; the sequence is GDPYDDIVPNCFFFPQHSAPRANV. The chain crosses the membrane as a helical span at residues 192-212; that stretch reads FLIILSALVIASIFLNLIIIF. At 213–239 the chain is on the cytoplasmic side; that stretch reads ANKKLEKGTRYYVSQRYQKREALISTR. Residues 240–260 form a helical membrane-spanning segment; it reads IIVYIAASQFLGMVLYSTIVL. The Extracellular segment spans residues 261–276; sequence TLRLHKSMIPVSMYHN. The chain crosses the membrane as a helical span at residues 277–297; it reads IVWWAYTVPFAAVALPALLIH. The Cytoplasmic portion of the chain corresponds to 298 to 332; it reads RINLVGSNRKRVINRITAKVETQEEHMKSLKELWG.

It belongs to the nematode receptor-like protein sra family.

Its subcellular location is the membrane. This is Serpentine receptor class alpha-10 from Caenorhabditis briggsae.